The sequence spans 581 residues: Arginine--tRNA ligase (581 aa).

The short motif at 126–136 is the 'HIGH' region element; it reads PNLAKEMHVGH.

Belongs to the class-I aminoacyl-tRNA synthetase family. In terms of assembly, monomer.

The protein localises to the cytoplasm. It catalyses the reaction tRNA(Arg) + L-arginine + ATP = L-arginyl-tRNA(Arg) + AMP + diphosphate. This Shewanella piezotolerans (strain WP3 / JCM 13877) protein is Arginine--tRNA ligase.